An 81-amino-acid polypeptide reads, in one-letter code: Conotoxin Lt6.4 (81 aa).

The N-terminal stretch at 1–19 (MKLVLAIVLILMFLSLSAG) is a signal peptide. Residues 20 to 42 (AETSDNGVSRGGHRPQYWPVTPP) constitute a propeptide that is removed on maturation. 3 disulfides stabilise this stretch: Cys-46-Cys-60, Cys-53-Cys-65, and Cys-59-Cys-80.

It belongs to the conotoxin I3 superfamily. In terms of tissue distribution, expressed by the venom duct.

Its subcellular location is the secreted. The sequence is that of Conotoxin Lt6.4 from Conus litteratus (Lettered cone).